We begin with the raw amino-acid sequence, 535 residues long: EH domain-containing protein 3 (535 aa).

An N-acetylmethionine modification is found at methionine 1. One can recognise a Dynamin-type G domain in the interval 55-286; it reads FDNKPMVLLV…DLFRDIQSLP (232 aa). Residues 65 to 72 are G1 motif; it reads GQYSTGKT. Residue 65–72 participates in ATP binding; that stretch reads GQYSTGKT. Residues 91–92 are G2 motif; it reads EP. Residues 153–156 form a G3 motif region; sequence DTPG. Residues 198–227 adopt a coiled-coil conformation; sequence DEFSEVIKALKNHEDKMRVVLNKADQIETQ. A G4 motif region spans residues 219–222; the sequence is NKAD. An ATP-binding site is contributed by lysine 220. Position 243 (isoleucine 243) is a region of interest, G5 motif. Tryptophan 258 serves as a coordination point for ATP. Residue lysine 315 forms a Glycyl lysine isopeptide (Lys-Gly) (interchain with G-Cter in SUMO) linkage. Phosphoserine is present on residues serine 349 and serine 456. The region spanning 444–532 is the EH domain; it reads DKPMYDEIFY…AHLLPPSKRK (89 aa). The EF-hand domain maps to 476 to 511; the sequence is LPNSVLGKIWKLADIDKDGMLDDDEFALANHLIKVK. Residues aspartate 489, aspartate 491, aspartate 493, methionine 495, and glutamate 500 each coordinate Ca(2+). Lysine 511 participates in a covalent cross-link: Glycyl lysine isopeptide (Lys-Gly) (interchain with G-Cter in SUMO).

Belongs to the TRAFAC class dynamin-like GTPase superfamily. Dynamin/Fzo/YdjA family. EHD subfamily. As to quaternary structure, homooligomer, and heterooligomer with EHD1, EHD2 and EHD4, ATP-binding is required for heterooligomerization. Interacts with PACSIN1. Interacts with PACSIN2. Interacts (via EH domain) with MICALL1. Interacts (via EH domain) with RAB11FIP2. Interacts with ANK2. As to expression, highly expressed in heart and brain and moderately expressed in kidney, liver, and placenta.

It localises to the recycling endosome membrane. The protein localises to the cell membrane. It is found in the cell projection. The protein resides in the cilium membrane. Its function is as follows. ATP- and membrane-binding protein that controls membrane reorganization/tubulation upon ATP hydrolysis. In vitro causes tubulation of endocytic membranes. Binding to phosphatidic acid induces its membrane tubulation activity. Plays a role in endocytic transport. Involved in early endosome to recycling endosome compartment (ERC), retrograde early endosome to Golgi, and endosome to plasma membrane (rapid recycling) protein transport. Involved in the regulation of Golgi maintenance and morphology. Involved in the recycling of internalized D1 dopamine receptor. Plays a role in cardiac protein trafficking probably implicating ANK2. Involved in the ventricular membrane targeting of SLC8A1 and CACNA1C and probably the atrial membrane localization of CACNA1GG and CACNA1H implicated in the regulation of atrial myocyte excitability and cardiac conduction. In conjunction with EHD4 may be involved in endocytic trafficking of KDR/VEGFR2 implicated in control of glomerular function. Involved in the rapid recycling of integrin beta-3 implicated in cell adhesion maintenance. Involved in the unidirectional retrograde dendritic transport of endocytosed BACE1 and in efficient sorting of BACE1 to axons implicating a function in neuronal APP processing. Plays a role in the formation of the ciliary vesicle, an early step in cilium biogenesis; possibly sharing redundant functions with EHD1. This Homo sapiens (Human) protein is EH domain-containing protein 3.